The primary structure comprises 482 residues: UDP-N-acetylmuramate--L-alanine ligase (482 aa).

An ATP-binding site is contributed by 122–128 (GTHGKTT).

The protein belongs to the MurCDEF family.

The protein localises to the cytoplasm. The enzyme catalyses UDP-N-acetyl-alpha-D-muramate + L-alanine + ATP = UDP-N-acetyl-alpha-D-muramoyl-L-alanine + ADP + phosphate + H(+). Its pathway is cell wall biogenesis; peptidoglycan biosynthesis. In terms of biological role, cell wall formation. The chain is UDP-N-acetylmuramate--L-alanine ligase from Mycolicibacterium smegmatis (strain ATCC 700084 / mc(2)155) (Mycobacterium smegmatis).